Here is a 429-residue protein sequence, read N- to C-terminus: 3-phosphoshikimate 1-carboxyvinyltransferase (429 aa).

3-phosphoshikimate-binding residues include Lys11, Ser12, and Arg16. Lys11 contributes to the phosphoenolpyruvate binding site. Phosphoenolpyruvate-binding residues include Gly82 and Arg110. 3-phosphoshikimate contacts are provided by Ser155, Gln157, Asp302, and Lys329. Gln157 lines the phosphoenolpyruvate pocket. The Proton acceptor role is filled by Asp302. Phosphoenolpyruvate is bound by residues Arg333 and Arg385.

It belongs to the EPSP synthase family. As to quaternary structure, monomer.

The protein resides in the cytoplasm. It carries out the reaction 3-phosphoshikimate + phosphoenolpyruvate = 5-O-(1-carboxyvinyl)-3-phosphoshikimate + phosphate. It functions in the pathway metabolic intermediate biosynthesis; chorismate biosynthesis; chorismate from D-erythrose 4-phosphate and phosphoenolpyruvate: step 6/7. Functionally, catalyzes the transfer of the enolpyruvyl moiety of phosphoenolpyruvate (PEP) to the 5-hydroxyl of shikimate-3-phosphate (S3P) to produce enolpyruvyl shikimate-3-phosphate and inorganic phosphate. In Helicobacter pylori (strain Shi470), this protein is 3-phosphoshikimate 1-carboxyvinyltransferase.